The following is a 355-amino-acid chain: Isopentenyl-diphosphate delta-isomerase (355 aa).

A substrate-binding site is contributed by 12–13 (RK). FMN contacts are provided by residues Ser-70, 71–73 (SMT), Ser-101, and Asn-130. 101–103 (SMR) provides a ligand contact to substrate. A substrate-binding site is contributed by Gln-165. Glu-166 serves as a coordination point for Mg(2+). Residues Lys-197 and 308-309 (AG) each bind FMN.

It belongs to the IPP isomerase type 2 family. Homooctamer. Dimer of tetramers. FMN serves as cofactor. It depends on NADPH as a cofactor. Mg(2+) is required as a cofactor.

The protein localises to the cytoplasm. The enzyme catalyses isopentenyl diphosphate = dimethylallyl diphosphate. Its function is as follows. Involved in the biosynthesis of isoprenoids. Catalyzes the 1,3-allylic rearrangement of the homoallylic substrate isopentenyl (IPP) to its allylic isomer, dimethylallyl diphosphate (DMAPP). The chain is Isopentenyl-diphosphate delta-isomerase from Chlorobium phaeovibrioides (strain DSM 265 / 1930) (Prosthecochloris vibrioformis (strain DSM 265)).